Here is a 363-residue protein sequence, read N- to C-terminus: Peptide-N(4)-(N-acetyl-beta-glucosaminyl)asparagine amidase (363 aa).

Residues cysteine 129, cysteine 132, cysteine 165, and cysteine 168 each coordinate Zn(2+). Cysteine 191 functions as the Nucleophile in the catalytic mechanism. Residues histidine 218 and aspartate 235 contribute to the active site. Glutamate 238 lines the substrate pocket. The tract at residues 325 to 363 is disordered; it reads RGKTQETKSESVSAASKSSNRGRESGSADWKAQRGEDGK. The segment covering 334-343 has biased composition (low complexity); sequence ESVSAASKSS. The segment covering 345–363 has biased composition (basic and acidic residues); that stretch reads RGRESGSADWKAQRGEDGK.

This sequence belongs to the transglutaminase-like superfamily. PNGase family. In terms of assembly, interacts with RAD23 subunit of 26S proteasome. Zn(2+) is required as a cofactor.

The protein localises to the cytoplasm. Its subcellular location is the nucleus. It catalyses the reaction Hydrolysis of an N(4)-(acetyl-beta-D-glucosaminyl)asparagine residue in which the glucosamine residue may be further glycosylated, to yield a (substituted) N-acetyl-beta-D-glucosaminylamine and a peptide containing an aspartate residue.. Inhibited by Z-VAD-fmk, a well-known caspase inhibitor. Also inhibited by Man9GlcNAc2-iodoacetoamide. Both molecules inhibit enzyme activity through covalent binding of the carbohydrate to the single Cys-191 residue. Its function is as follows. Specifically deglycosylates the denatured form of N-linked glycoproteins in the cytoplasm and assists their proteasome-mediated degradation. Cleaves the beta-aspartyl-glucosamine (GlcNAc) of the glycan and the amide side chain of Asn, converting Asn to Asp. Prefers proteins containing high-mannose over those bearing complex type oligosaccharides. Can recognize misfolded proteins in the endoplasmic reticulum that are exported to the cytosol to be destroyed and deglycosylate them, while it has no activity toward native proteins. Deglycosylation is a prerequisite for subsequent proteasome-mediated degradation of some, but not all, misfolded glycoproteins. Involved in the formation of free oligosaccharide in cytosol. The protein is Peptide-N(4)-(N-acetyl-beta-glucosaminyl)asparagine amidase (PNG1) of Saccharomyces cerevisiae (strain ATCC 204508 / S288c) (Baker's yeast).